Reading from the N-terminus, the 434-residue chain is Serine--tRNA ligase (434 aa).

Position 239 to 241 (239 to 241 (TAE)) interacts with L-serine. 270-272 (RSE) contacts ATP. An L-serine-binding site is contributed by E293. 357 to 360 (EISS) is an ATP binding site. S392 contacts L-serine.

It belongs to the class-II aminoacyl-tRNA synthetase family. Type-1 seryl-tRNA synthetase subfamily. In terms of assembly, homodimer. The tRNA molecule binds across the dimer.

The protein localises to the cytoplasm. The enzyme catalyses tRNA(Ser) + L-serine + ATP = L-seryl-tRNA(Ser) + AMP + diphosphate + H(+). It catalyses the reaction tRNA(Sec) + L-serine + ATP = L-seryl-tRNA(Sec) + AMP + diphosphate + H(+). It participates in aminoacyl-tRNA biosynthesis; selenocysteinyl-tRNA(Sec) biosynthesis; L-seryl-tRNA(Sec) from L-serine and tRNA(Sec): step 1/1. Catalyzes the attachment of serine to tRNA(Ser). Is also able to aminoacylate tRNA(Sec) with serine, to form the misacylated tRNA L-seryl-tRNA(Sec), which will be further converted into selenocysteinyl-tRNA(Sec). This is Serine--tRNA ligase from Cupriavidus necator (strain ATCC 17699 / DSM 428 / KCTC 22496 / NCIMB 10442 / H16 / Stanier 337) (Ralstonia eutropha).